The primary structure comprises 211 residues: Pyridoxine/pyridoxamine 5'-phosphate oxidase (211 aa).

Substrate-binding positions include 7–10 (RREY) and K65. FMN contacts are provided by residues 60–65 (RIVLLK), 75–76 (YT), R81, K82, and Q104. Residues Y122, R126, and S130 each coordinate substrate. FMN is bound by residues 139–140 (QS) and W184. 190 to 192 (RLH) contacts substrate. R194 is a binding site for FMN.

The protein belongs to the pyridoxamine 5'-phosphate oxidase family. Homodimer. The cofactor is FMN.

It catalyses the reaction pyridoxamine 5'-phosphate + O2 + H2O = pyridoxal 5'-phosphate + H2O2 + NH4(+). The catalysed reaction is pyridoxine 5'-phosphate + O2 = pyridoxal 5'-phosphate + H2O2. Its pathway is cofactor metabolism; pyridoxal 5'-phosphate salvage; pyridoxal 5'-phosphate from pyridoxamine 5'-phosphate: step 1/1. It participates in cofactor metabolism; pyridoxal 5'-phosphate salvage; pyridoxal 5'-phosphate from pyridoxine 5'-phosphate: step 1/1. Catalyzes the oxidation of either pyridoxine 5'-phosphate (PNP) or pyridoxamine 5'-phosphate (PMP) into pyridoxal 5'-phosphate (PLP). The polypeptide is Pyridoxine/pyridoxamine 5'-phosphate oxidase (Vibrio campbellii (strain ATCC BAA-1116)).